The chain runs to 326 residues: 2-dehydropantoate 2-reductase (326 aa).

Residues 7–12 and Asn103 contribute to the NADP(+) site; that span reads GAGAIG. Asn103 contacts substrate. Lys205 serves as the catalytic Proton donor. The substrate site is built by Asn209, Asn213, and Ser274. Glu286 contacts NADP(+).

This sequence belongs to the ketopantoate reductase family.

Its subcellular location is the cytoplasm. The catalysed reaction is (R)-pantoate + NADP(+) = 2-dehydropantoate + NADPH + H(+). It participates in cofactor biosynthesis; (R)-pantothenate biosynthesis; (R)-pantoate from 3-methyl-2-oxobutanoate: step 2/2. In terms of biological role, catalyzes the NADPH-dependent reduction of ketopantoate into pantoic acid. The protein is 2-dehydropantoate 2-reductase of Mesorhizobium japonicum (strain LMG 29417 / CECT 9101 / MAFF 303099) (Mesorhizobium loti (strain MAFF 303099)).